The sequence spans 308 residues: Ycf92-like protein (308 aa).

A run of 5 helical transmembrane segments spans residues 41–61 (FANN…TLIA), 75–95 (LLTL…GLGV), 153–173 (ISTI…TTAP), 192–212 (IPVT…PLVL), and 288–308 (WLAI…GNQI).

Belongs to the ycf92 family.

Its subcellular location is the membrane. The protein is Ycf92-like protein of Nostoc sp. (strain PCC 7120 / SAG 25.82 / UTEX 2576).